Here is a 2168-residue protein sequence, read N- to C-terminus: Bromodomain adjacent to zinc finger domain protein 2B (2168 aa).

Disordered stretches follow at residues 1 to 29 (MESG…ASVV), 140 to 348 (FAPP…KQPQ), 409 to 428 (LKAG…SELR), 459 to 479 (SNPK…ENNH), 528 to 698 (STPF…LHIA), 719 to 740 (GTSS…RRVT), 841 to 872 (MEGR…PPNV), and 1021 to 1043 (RKKA…LNKE). Residues 8 to 29 (PSSAASSTTPTSSSTPSVASVV) are compositionally biased toward low complexity. 2 stretches are compositionally biased toward polar residues: residues 146 to 163 (NHDS…SNRN) and 171 to 193 (GSIN…STTA). Low complexity-rich tracts occupy residues 194–204 (SSSMGQTKSTS) and 240–263 (ESSS…ISSS). Positions 264–291 (DSDDLEEDEEEEDQSIEESEDDDSDSES) are enriched in acidic residues. Residues 307 to 325 (SDPKADGQKATEKAQEKRI) show a composition bias toward basic and acidic residues. The segment covering 335–348 (SQTHSFQSQQKQPQ) has biased composition (low complexity). 2 stretches are compositionally biased toward polar residues: residues 461-479 (PKAT…ENNH) and 528-551 (STPF…QTPV). The span at 592–605 (RGTDSDIPSSKDSE) shows a compositional bias: basic and acidic residues. Positions 606–663 (DSNEDEEEDDEEEDEEDDEDDESDDSQSESDSNSESDTEGSEEEDDDDKDQDESDSDT) are enriched in acidic residues. Residues 670–693 (MKLNKTTSSVKSPSMSLTGHSTPR) are compositionally biased toward polar residues. Low complexity predominate over residues 720–732 (TSSSTLTSSPHSG). Residues 739-810 (VTDERELRIP…DNFSFSAKIR (72 aa)) form the MBD domain. Basic and acidic residues predominate over residues 841–861 (MEGRRGRPPNPDRQRAREESR). A coiled-coil region spans residues 883 to 1061 (AKLLRKLQAQ…ELEMAKELKK (179 aa)). In terms of domain architecture, DDT spans 1087–1152 (GSTFSDCLMV…LSAAVCDPGL (66 aa)). The interval 1265-1341 (KRDTSGGIDL…CEDEDEGDQA (77 aa)) is disordered. Residues 1297–1321 (SDYDDDDDDDSDDQGDEDDEDEEDK) are compositionally biased toward acidic residues. Basic and acidic residues predominate over residues 1322 to 1331 (EDKKGKKTDI). The stretch at 1334–1375 (DEDEGDQAASVEELEKQIEKLSKQQSQYRRKLFDASHSLRSV) forms a coiled coil. Lys-1425 participates in a covalent cross-link: Glycyl lysine isopeptide (Lys-Gly) (interchain with G-Cter in SUMO2). Position 1462 is an N6-acetyllysine (Lys-1462). Phosphoserine occurs at positions 1465 and 1467. A compositionally biased stretch (polar residues) spans 1503-1533 (SGKHSLGSVQSTATQSNVEKADSNNLFNTGS). 3 disordered regions span residues 1503–1542 (SGKH…FYSP), 1582–1607 (SLVT…SSAQ), and 1670–1694 (TSNV…AQPA). A compositionally biased stretch (pro residues) spans 1588-1600 (SQPPSKSPSPTPA). Positions 1670–1692 (TSNVASSKSESPVPQNEKATSAQ) are enriched in polar residues. Ser-1680 carries the post-translational modification Phosphoserine. The segment at 1931-1981 (KVYCQICRKGDNEELLLLCDGCDKGCHTYCHRPKITTIPDGDWFCPACIAK) adopts a PHD-type zinc-finger fold. Positions 1998 to 2040 (KTNESKKGKKVTLTGDTEDEDSASTSSSLKRGNKDLKKRKMEE) are disordered. At Thr-2014 the chain carries Phosphothreonine. Ser-2019 is subject to Phosphoserine. The segment covering 2029–2040 (GNKDLKKRKMEE) has biased composition (basic and acidic residues). The Bromo domain maps to 2060–2164 (RDDSKDLALC…KYFEKKWTDT (105 aa)).

This sequence belongs to the WAL family. Component of the BRF-1 ISWI chromatin remodeling complex, at least composed of SMARCA1 and BAZ2B, which regulates the spacing of histone octamers on the DNA template to facilitate access to DNA. Within the BRF-1 ISWI chromatin remodeling complex interacts with SMARCA1; the interaction is direct. Component of the BRF-5 ISWI chromatin remodeling complex, at least composed of SMARCA5/SNF2H and BAZ2B, which regulates the spacing of histone octamers on the DNA template to facilitate access to DNA. Within the BRF-5 ISWI chromatin remodeling complex interacts with SMARCA5/SNF2H; the interaction is direct. Interacts with acetylated lysine residues on histone H1.4, H2A, H2B, H3 and H4 (in vitro). Interacts with EHMT1. Expressed at varying levels in several tissues, whereas a smaller transcript was expressed specifically in testis.

The protein resides in the nucleus. Regulatory subunit of the ATP-dependent BRF-1 and BRF-5 ISWI chromatin remodeling complexes, which form ordered nucleosome arrays on chromatin and facilitate access to DNA during DNA-templated processes such as DNA replication, transcription, and repair. Both complexes regulate the spacing of nucleosomes along the chromatin and have the ability to slide mononucleosomes to the center of a DNA template. The BRF-1 ISWI chromatin remodeling complex has a lower ATP hydrolysis rate than the BRF-5 ISWI chromatin remodeling complex. Chromatin reader protein, which may play a role in transcriptional regulation via interaction with ISWI. Involved in positively modulating the rate of age-related behavioral deterioration. Represses the expression of mitochondrial function-related genes, perhaps by occupying their promoter regions, working in concert with histone methyltransferase EHMT1. The protein is Bromodomain adjacent to zinc finger domain protein 2B (BAZ2B) of Homo sapiens (Human).